The primary structure comprises 343 residues: Anthranilate phosphoribosyltransferase (343 aa).

5-phospho-alpha-D-ribose 1-diphosphate-binding positions include glycine 84, 87–88 (GD), threonine 92, 94–97 (NIST), 112–120 (KHGNRGVSS), and serine 124. Glycine 84 contributes to the anthranilate binding site. Serine 96 is a Mg(2+) binding site. Position 115 (asparagine 115) interacts with anthranilate. Arginine 170 provides a ligand contact to anthranilate. The Mg(2+) site is built by aspartate 229 and glutamate 230.

It belongs to the anthranilate phosphoribosyltransferase family. In terms of assembly, homodimer. Mg(2+) serves as cofactor.

The catalysed reaction is N-(5-phospho-beta-D-ribosyl)anthranilate + diphosphate = 5-phospho-alpha-D-ribose 1-diphosphate + anthranilate. It functions in the pathway amino-acid biosynthesis; L-tryptophan biosynthesis; L-tryptophan from chorismate: step 2/5. Its function is as follows. Catalyzes the transfer of the phosphoribosyl group of 5-phosphorylribose-1-pyrophosphate (PRPP) to anthranilate to yield N-(5'-phosphoribosyl)-anthranilate (PRA). This Burkholderia cenocepacia (strain ATCC BAA-245 / DSM 16553 / LMG 16656 / NCTC 13227 / J2315 / CF5610) (Burkholderia cepacia (strain J2315)) protein is Anthranilate phosphoribosyltransferase.